The sequence spans 161 residues: 3-isopropylmalate dehydratase small subunit (161 aa).

It belongs to the LeuD family. LeuD type 2 subfamily. Heterodimer of LeuC and LeuD.

The enzyme catalyses (2R,3S)-3-isopropylmalate = (2S)-2-isopropylmalate. It functions in the pathway amino-acid biosynthesis; L-leucine biosynthesis; L-leucine from 3-methyl-2-oxobutanoate: step 2/4. Catalyzes the isomerization between 2-isopropylmalate and 3-isopropylmalate, via the formation of 2-isopropylmaleate. In Metallosphaera sedula (strain ATCC 51363 / DSM 5348 / JCM 9185 / NBRC 15509 / TH2), this protein is 3-isopropylmalate dehydratase small subunit.